The sequence spans 133 residues: Holo-[acyl-carrier-protein] synthase (133 aa).

Mg(2+) contacts are provided by aspartate 8 and glutamate 58.

Belongs to the P-Pant transferase superfamily. AcpS family. Requires Mg(2+) as cofactor.

It localises to the cytoplasm. The enzyme catalyses apo-[ACP] + CoA = holo-[ACP] + adenosine 3',5'-bisphosphate + H(+). Its function is as follows. Transfers the 4'-phosphopantetheine moiety from coenzyme A to a Ser of acyl-carrier-protein. This Erythrobacter litoralis (strain HTCC2594) protein is Holo-[acyl-carrier-protein] synthase.